A 258-amino-acid chain; its full sequence is uncharacterized protein (258 aa).

NADP(+) contacts are provided by Ile17, Asp53, Asn80, Arg113, Tyr145, Lys149, Ile178, and Ser180. Tyr145 functions as the Proton donor in the catalytic mechanism. Lys149 (lowers pKa of active site Tyr) is an active-site residue.

This sequence belongs to the short-chain dehydrogenases/reductases (SDR) family.

It localises to the cytoplasm. It is found in the nucleus. This is an uncharacterized protein from Schizosaccharomyces pombe (strain 972 / ATCC 24843) (Fission yeast).